The primary structure comprises 379 residues: Copper-containing nitrite reductase (379 aa).

The segment at residues 1-32 (MSEQFRLTRRSMLAGAAVAGALAPVVTSVAHA) is a signal peptide (tat-type signal). 2 Plastocyanin-like domains span residues 33-214 (EGGG…YDKV) and 215-379 (YYVG…PTSG). Residues His-134, His-139, His-174, Cys-175, His-184, Met-189, and His-345 each contribute to the Cu cation site.

It belongs to the multicopper oxidase family. As to quaternary structure, homotrimer. The cofactor is Cu(2+). Cu(+) is required as a cofactor. FAD serves as cofactor. Predicted to be exported by the Tat system. The position of the signal peptide cleavage has not been experimentally proven.

The protein localises to the periplasm. The catalysed reaction is nitric oxide + Fe(III)-[cytochrome c] + H2O = Fe(II)-[cytochrome c] + nitrite + 2 H(+). The protein operates within nitrogen metabolism; nitrate reduction (denitrification); dinitrogen from nitrate: step 2/4. This chain is Copper-containing nitrite reductase (nirU), found in Neorhizobium galegae (Rhizobium galegae).